An 88-amino-acid polypeptide reads, in one-letter code: Small ribosomal subunit protein bS20 (88 aa).

Positions 1 to 20 (MANTAQARKRARQAVVQNAH) are disordered.

Belongs to the bacterial ribosomal protein bS20 family.

Functionally, binds directly to 16S ribosomal RNA. The chain is Small ribosomal subunit protein bS20 from Ralstonia nicotianae (strain ATCC BAA-1114 / GMI1000) (Ralstonia solanacearum).